Consider the following 194-residue polypeptide: Large ribosomal subunit protein uL10 (194 aa).

The span at 172 to 187 (EGGAAEAPAEAATEAP) shows a compositional bias: low complexity. Residues 172–194 (EGGAAEAPAEAATEAPAEAEAES) are disordered.

This sequence belongs to the universal ribosomal protein uL10 family. As to quaternary structure, part of the ribosomal stalk of the 50S ribosomal subunit. The N-terminus interacts with L11 and the large rRNA to form the base of the stalk. The C-terminus forms an elongated spine to which L12 dimers bind in a sequential fashion forming a multimeric L10(L12)X complex.

In terms of biological role, forms part of the ribosomal stalk, playing a central role in the interaction of the ribosome with GTP-bound translation factors. This is Large ribosomal subunit protein uL10 from Rhodococcus erythropolis (strain PR4 / NBRC 100887).